The sequence spans 544 residues: Chaperonin GroEL (544 aa).

ATP-binding positions include 30 to 33, lysine 51, 87 to 91, glycine 415, 481 to 483, and aspartate 497; these read TLGP, DGTTT, and DAL.

The protein belongs to the chaperonin (HSP60) family. As to quaternary structure, forms a cylinder of 14 subunits composed of two heptameric rings stacked back-to-back. Interacts with the co-chaperonin GroES.

The protein localises to the cytoplasm. The catalysed reaction is ATP + H2O + a folded polypeptide = ADP + phosphate + an unfolded polypeptide.. In terms of biological role, together with its co-chaperonin GroES, plays an essential role in assisting protein folding. The GroEL-GroES system forms a nano-cage that allows encapsulation of the non-native substrate proteins and provides a physical environment optimized to promote and accelerate protein folding. The protein is Chaperonin GroEL of Chlamydia trachomatis serovar D (strain ATCC VR-885 / DSM 19411 / UW-3/Cx).